Here is a 296-residue protein sequence, read N- to C-terminus: 4-hydroxybenzoate octaprenyltransferase (296 aa).

Helical transmembrane passes span 29–49 (IGVY…GKGA), 52–72 (LQTV…GCVI), 102–122 (ALVL…FTNA), 146–166 (YYPQ…AFTA), 169–189 (GELP…TVGY), 219–239 (VIIL…GARF), 241–261 (LGAC…WEFW), and 275–295 (FLHN…DYAV).

It belongs to the UbiA prenyltransferase family. Mg(2+) serves as cofactor.

The protein localises to the cell inner membrane. The catalysed reaction is all-trans-octaprenyl diphosphate + 4-hydroxybenzoate = 4-hydroxy-3-(all-trans-octaprenyl)benzoate + diphosphate. It participates in cofactor biosynthesis; ubiquinone biosynthesis. Catalyzes the prenylation of para-hydroxybenzoate (PHB) with an all-trans polyprenyl group. Mediates the second step in the final reaction sequence of ubiquinone-8 (UQ-8) biosynthesis, which is the condensation of the polyisoprenoid side chain with PHB, generating the first membrane-bound Q intermediate 3-octaprenyl-4-hydroxybenzoate. The sequence is that of 4-hydroxybenzoate octaprenyltransferase from Pseudomonas syringae pv. syringae (strain B728a).